Consider the following 206-residue polypeptide: Protein GrpE (206 aa).

It belongs to the GrpE family. Homodimer.

Its subcellular location is the cytoplasm. Functionally, participates actively in the response to hyperosmotic and heat shock by preventing the aggregation of stress-denatured proteins, in association with DnaK and GrpE. It is the nucleotide exchange factor for DnaK and may function as a thermosensor. Unfolded proteins bind initially to DnaJ; upon interaction with the DnaJ-bound protein, DnaK hydrolyzes its bound ATP, resulting in the formation of a stable complex. GrpE releases ADP from DnaK; ATP binding to DnaK triggers the release of the substrate protein, thus completing the reaction cycle. Several rounds of ATP-dependent interactions between DnaJ, DnaK and GrpE are required for fully efficient folding. The sequence is that of Protein GrpE from Shewanella sp. (strain W3-18-1).